We begin with the raw amino-acid sequence, 408 residues long: Phosphoglycerate kinase (408 aa).

Substrate contacts are provided by residues 24–26 (DIN), Arg40, 63–66 (HQGR), Arg120, and Arg160. ATP contacts are provided by residues Glu331 and 357–360 (GGHM).

The protein belongs to the phosphoglycerate kinase family.

The protein resides in the cytoplasm. The enzyme catalyses (2R)-3-phosphoglycerate + ATP = (2R)-3-phospho-glyceroyl phosphate + ADP. It functions in the pathway carbohydrate degradation; glycolysis; pyruvate from D-glyceraldehyde 3-phosphate: step 2/5. The sequence is that of Phosphoglycerate kinase (pgk) from Saccharolobus solfataricus (strain ATCC 35092 / DSM 1617 / JCM 11322 / P2) (Sulfolobus solfataricus).